We begin with the raw amino-acid sequence, 176 residues long: Peptide deformylase 2 (176 aa).

Fe cation is bound by residues Cys99 and His141. Glu142 is a catalytic residue. His145 is a Fe cation binding site.

It belongs to the polypeptide deformylase family. Fe(2+) is required as a cofactor.

It carries out the reaction N-terminal N-formyl-L-methionyl-[peptide] + H2O = N-terminal L-methionyl-[peptide] + formate. In terms of biological role, removes the formyl group from the N-terminal Met of newly synthesized proteins. Requires at least a dipeptide for an efficient rate of reaction. N-terminal L-methionine is a prerequisite for activity but the enzyme has broad specificity at other positions. The chain is Peptide deformylase 2 from Bordetella bronchiseptica (strain ATCC BAA-588 / NCTC 13252 / RB50) (Alcaligenes bronchisepticus).